The following is a 31-amino-acid chain: Photosystem II reaction center protein T (31 aa).

Residue Met1 is modified to N-formylmethionine. Residues 3-23 traverse the membrane as a helical segment; sequence SVAYILVLTMALAVLFFAIAF.

This sequence belongs to the PsbT family. PSII is composed of 1 copy each of membrane proteins PsbA, PsbB, PsbC, PsbD, PsbE, PsbF, PsbH, PsbI, PsbJ, PsbK, PsbL, PsbM, PsbT, PsbX, PsbY, PsbZ, Psb30/Ycf12, peripheral proteins PsbO, CyanoQ (PsbQ), PsbU, PsbV and a large number of cofactors. It forms dimeric complexes.

The protein localises to the cellular thylakoid membrane. Its function is as follows. Found at the monomer-monomer interface of the photosystem II (PS II) dimer, plays a role in assembly and dimerization of PSII. PSII is a light-driven water plastoquinone oxidoreductase, using light energy to abstract electrons from H(2)O, generating a proton gradient subsequently used for ATP formation. This chain is Photosystem II reaction center protein T, found in Synechocystis sp. (strain ATCC 27184 / PCC 6803 / Kazusa).